Consider the following 115-residue polypeptide: uncharacterized protein (115 aa).

Residues 1–115 (MGVEISLDPP…ETVIKLSAAE (115 aa)) enclose the MSP domain.

This is an uncharacterized protein from Caenorhabditis elegans.